The chain runs to 212 residues: Peptide methionine sulfoxide reductase MsrA (212 aa).

Residue Cys51 is part of the active site.

It belongs to the MsrA Met sulfoxide reductase family.

The catalysed reaction is L-methionyl-[protein] + [thioredoxin]-disulfide + H2O = L-methionyl-(S)-S-oxide-[protein] + [thioredoxin]-dithiol. It carries out the reaction [thioredoxin]-disulfide + L-methionine + H2O = L-methionine (S)-S-oxide + [thioredoxin]-dithiol. Has an important function as a repair enzyme for proteins that have been inactivated by oxidation. Catalyzes the reversible oxidation-reduction of methionine sulfoxide in proteins to methionine. This is Peptide methionine sulfoxide reductase MsrA from Vibrio parahaemolyticus serotype O3:K6 (strain RIMD 2210633).